The sequence spans 129 residues: UPF0148 protein APE_0207 (129 aa).

This sequence belongs to the UPF0148 family.

This Aeropyrum pernix (strain ATCC 700893 / DSM 11879 / JCM 9820 / NBRC 100138 / K1) protein is UPF0148 protein APE_0207.